A 191-amino-acid polypeptide reads, in one-letter code: Prostaglandin-H2 D-isomerase (191 aa).

Positions 1 to 24 (MGALCTLWLGLVLLGVLGALQTSA) are cleaved as a signal peptide. Residue Q25 is modified to Pyrrolidone carboxylic acid. N51 carries N-linked (GlcNAc...) asparagine glycosylation. The Nucleophile role is filled by C65. N78 carries an N-linked (GlcNAc...) asparagine glycan. C89 and C186 form a disulfide bridge.

Belongs to the calycin superfamily. Lipocalin family. As to quaternary structure, monomer. Post-translationally, N- and O-glycosylated. Both N-glycosylation recognition sites are almost quantitatively occupied by N-glycans of the biantennary complex type, with a considerable proportion of structures bearing a bisecting GlcNAc. N-glycan at Asn-78: dHex1Hex5HexNAc4. Agalacto structure as well as sialylated and nonsialylated oligosaccharides bearing alpha2-3- and/or alpha2-6-linked NeuNAc are present.

The protein localises to the rough endoplasmic reticulum. Its subcellular location is the nucleus membrane. It is found in the golgi apparatus. The protein resides in the cytoplasm. It localises to the perinuclear region. The protein localises to the secreted. It carries out the reaction prostaglandin H2 = prostaglandin D2. Catalyzes the conversion of PGH2 to PGD2, a prostaglandin involved in smooth muscle contraction/relaxation and a potent inhibitor of platelet aggregation. Involved in a variety of CNS functions, such as sedation, NREM sleep and PGE2-induced allodynia, and may have an anti-apoptotic role in oligodendrocytes. Binds small non-substrate lipophilic molecules, including biliverdin, bilirubin, retinal, retinoic acid and thyroid hormone, and may act as a scavenger for harmful hydrophobic molecules and as a secretory retinoid and thyroid hormone transporter. Possibly involved in development and maintenance of the blood-brain, blood-retina, blood-aqueous humor and blood-testis barrier. It is likely to play important roles in both maturation and maintenance of the central nervous system and male reproductive system. Involved in PLA2G3-dependent maturation of mast cells. PLA2G3 is secreted by immature mast cells and acts on nearby fibroblasts upstream to PTDGS to synthesize PGD2, which in turn promotes mast cell maturation and degranulation via PTGDR. This is Prostaglandin-H2 D-isomerase (PTGDS) from Canis lupus familiaris (Dog).